Here is a 528-residue protein sequence, read N- to C-terminus: Tyrosine-protein kinase transforming protein Yes (528 aa).

Basic and acidic residues predominate over residues 1–12 (DKGPAMKYRTDN). Residues 1–35 (DKGPAMKYRTDNTPEPISSHVSHYGSDSSQATQSP) are disordered. A compositionally biased stretch (low complexity) spans 18–29 (SSHVSHYGSDSS). An SH3 domain is found at 81–142 (GGGTVFVALY…PSNYVAPADS (62 aa)). The region spanning 148–245 (WYFGKMGRKD…GLCHKLTTVC (98 aa)) is the SH2 domain. The Protein kinase domain occupies 267–520 (LRLEVKLGQG…YIQSFLEDYF (254 aa)). ATP-binding positions include 273–281 (LGQGCFGEV) and K295. D386 functions as the Proton acceptor in the catalytic mechanism. The residue at position 416 (Y416) is a Phosphotyrosine; by autocatalysis.

This sequence belongs to the protein kinase superfamily. Tyr protein kinase family. SRC subfamily.

The catalysed reaction is L-tyrosyl-[protein] + ATP = O-phospho-L-tyrosyl-[protein] + ADP + H(+). The protein is Tyrosine-protein kinase transforming protein Yes (V-YES) of Galliformes (Y73SV).